Here is a 254-residue protein sequence, read N- to C-terminus: Acetylglutamate kinase (254 aa).

Substrate is bound by residues 40–41 (GG), Arg-62, and Asn-158.

The protein belongs to the acetylglutamate kinase family. ArgB subfamily.

Its subcellular location is the cytoplasm. It catalyses the reaction N-acetyl-L-glutamate + ATP = N-acetyl-L-glutamyl 5-phosphate + ADP. It participates in amino-acid biosynthesis; L-arginine biosynthesis; N(2)-acetyl-L-ornithine from L-glutamate: step 2/4. Functionally, catalyzes the ATP-dependent phosphorylation of N-acetyl-L-glutamate. The chain is Acetylglutamate kinase from Chloroflexus aggregans (strain MD-66 / DSM 9485).